The chain runs to 166 residues: Ribosome maturation factor RimM (166 aa).

Residues Asp-91 to Leu-165 enclose the PRC barrel domain.

This sequence belongs to the RimM family. In terms of assembly, binds ribosomal protein uS19.

The protein localises to the cytoplasm. Its function is as follows. An accessory protein needed during the final step in the assembly of 30S ribosomal subunit, possibly for assembly of the head region. Essential for efficient processing of 16S rRNA. May be needed both before and after RbfA during the maturation of 16S rRNA. It has affinity for free ribosomal 30S subunits but not for 70S ribosomes. This chain is Ribosome maturation factor RimM, found in Dinoroseobacter shibae (strain DSM 16493 / NCIMB 14021 / DFL 12).